The primary structure comprises 414 residues: Putative transporter AmpG 4 (414 aa).

A run of 12 helical transmembrane segments spans residues 15–35 (IFILGIVSGMPLVIIFSTLAV), 44–63 (IAVITTFAVARLSYSLKVFW), 84–104 (WLILCSSLMALVLIAMSKENP), 109–129 (TSFYFLTILLGFLSSTFDIAV), 150–170 (VFGYRIGMLITGAGALYLAEI), 177–197 (LTFCVIAIIFVVATIFIITVN), 230–250 (FAVTILLAVIFFKLGDAMLGA), 268–288 (IIAKLYGLIATLVGGFVGGIV), 295–315 (FKGLIITGIAQSLTHFAFIWL), 324–344 (ALLIAITIENFAAAMGATALV), 360–379 (YALLSSASSLCNNTVTIYAG), and 389–409 (GFFLFTIILALPALFILMYLN).

Belongs to the major facilitator superfamily.

The protein localises to the cell inner membrane. This Rickettsia conorii (strain ATCC VR-613 / Malish 7) protein is Putative transporter AmpG 4 (ampG4).